Here is a 210-residue protein sequence, read N- to C-terminus: Probable GTP-binding protein EngB (210 aa).

The region spanning 27–201 (MGIEVAFAGR…HQKLDIWFSQ (175 aa)) is the EngB-type G domain. GTP is bound by residues 35 to 42 (GRSNAGKS), 62 to 66 (GRTQL), 80 to 83 (DLPG), 147 to 150 (TKAD), and 180 to 182 (FSV). 2 residues coordinate Mg(2+): S42 and T64.

The protein belongs to the TRAFAC class TrmE-Era-EngA-EngB-Septin-like GTPase superfamily. EngB GTPase family. Mg(2+) is required as a cofactor.

Functionally, necessary for normal cell division and for the maintenance of normal septation. This Photorhabdus laumondii subsp. laumondii (strain DSM 15139 / CIP 105565 / TT01) (Photorhabdus luminescens subsp. laumondii) protein is Probable GTP-binding protein EngB.